The following is a 265-amino-acid chain: Glutamate racemase (265 aa).

Residues Asp12 to Ser13 and Tyr44 to Gly45 each bind substrate. Residue Cys75 is the Proton donor/acceptor of the active site. Asn76 to Thr77 is a substrate binding site. The active-site Proton donor/acceptor is the Cys186. Position 187-188 (Thr187–His188) interacts with substrate.

Belongs to the aspartate/glutamate racemases family.

The enzyme catalyses L-glutamate = D-glutamate. It functions in the pathway cell wall biogenesis; peptidoglycan biosynthesis. In terms of biological role, provides the (R)-glutamate required for cell wall biosynthesis. The sequence is that of Glutamate racemase from Pseudomonas aeruginosa (strain UCBPP-PA14).